The sequence spans 105 residues: MAAKIRREDEVIVLTGKDKGKRGKVTQVLVTEGKVLVEGINLVKKHQKPVPALGQAGGIISKEAPMDVSNVALFNSAAGKADRVGFRIEDGKKVRFFKSTGELVK.

The protein belongs to the universal ribosomal protein uL24 family. Part of the 50S ribosomal subunit.

In terms of biological role, one of two assembly initiator proteins, it binds directly to the 5'-end of the 23S rRNA, where it nucleates assembly of the 50S subunit. One of the proteins that surrounds the polypeptide exit tunnel on the outside of the subunit. The polypeptide is Large ribosomal subunit protein uL24 (Aeromonas salmonicida (strain A449)).